We begin with the raw amino-acid sequence, 309 residues long: Porphobilinogen deaminase (309 aa).

Cys241 bears the S-(dipyrrolylmethanemethyl)cysteine mark.

It belongs to the HMBS family. Monomer. The cofactor is dipyrromethane.

The catalysed reaction is 4 porphobilinogen + H2O = hydroxymethylbilane + 4 NH4(+). It participates in porphyrin-containing compound metabolism; protoporphyrin-IX biosynthesis; coproporphyrinogen-III from 5-aminolevulinate: step 2/4. Tetrapolymerization of the monopyrrole PBG into the hydroxymethylbilane pre-uroporphyrinogen in several discrete steps. In Bacillus cereus (strain AH820), this protein is Porphobilinogen deaminase.